The sequence spans 467 residues: MAREAAEKTATSTSLAALAGLVERYANPDFAIAPGGHVQTISPGHYTVSGLSRHVRLGDFVAHKSTTGTHLGEVVRVEPERVVVCPIEPGDPIGIHDVVIRKGAFRIAPTDNWCGRTINALAEPIDGLGALLQGDIRRSIANTAPPSMTRKRVEQGFRTGVRAIDIFSPLCLGQRLGIFAGSGVGKSTLLSMLARADAFDKVVIALVGERGREVREFIEDTLGDNLSKSVAVVATSDESPMLRKMAPLTAVTIAEHYRDKGDNVLLIVDSVTRFAHAIREVATAAGEPPIARGYPASVFTELPRLLERAGPGAEGAGTITAIISILVDGDNHNDPVADSARGILDGHIVLDRSLAEEGRYPPVNPLASISRLARKAWTPDQEKLVARLKSLIHRFEETRDLRLIGGYRPGGDADLDMAIKQVPVIYDVLKQMPGERPAFDAFTDLANALKAAAMGNQPGAAGLRGRG.

ATP is bound at residue 180–187; that stretch reads AGSGVGKS.

This sequence belongs to the ATPase alpha/beta chains family.

Its subcellular location is the cytoplasm. It carries out the reaction ATP + H2O + 4 H(+)(in) = ADP + phosphate + 5 H(+)(out). Its function is as follows. Probable catalytic subunit of a protein translocase for flagellum-specific export, or a proton translocase involved in local circuits at the flagellum. The chain is Flagellum-specific ATP synthase (fliI) from Rhizobium meliloti (strain 1021) (Ensifer meliloti).